The primary structure comprises 247 residues: Probable transcriptional regulatory protein Asuc_1803 (247 aa).

Belongs to the TACO1 family.

It is found in the cytoplasm. This is Probable transcriptional regulatory protein Asuc_1803 from Actinobacillus succinogenes (strain ATCC 55618 / DSM 22257 / CCUG 43843 / 130Z).